Consider the following 360-residue polypeptide: Polyamine aminopropyltransferase 2 (360 aa).

Residues 68–299 (DIWDEISLKE…TDWGFHIAAN (232 aa)) form the PABS domain. Position 94 (Gln-94) interacts with S-methyl-5'-thioadenosine. Positions 123 and 147 each coordinate spermidine. Residues Asp-167 and 201 to 202 (DA) contribute to the S-methyl-5'-thioadenosine site. Catalysis depends on Asp-219, which acts as the Proton acceptor.

Belongs to the spermidine/spermine synthase family. As to quaternary structure, homodimer or homotetramer.

The protein resides in the cytoplasm. It catalyses the reaction S-adenosyl 3-(methylsulfanyl)propylamine + putrescine = S-methyl-5'-thioadenosine + spermidine + H(+). It participates in amine and polyamine biosynthesis; spermidine biosynthesis; spermidine from putrescine: step 1/1. In terms of biological role, catalyzes the irreversible transfer of a propylamine group from the amino donor S-adenosylmethioninamine (decarboxy-AdoMet) to putrescine (1,4-diaminobutane) to yield spermidine. The chain is Polyamine aminopropyltransferase 2 from Bacillus anthracis.